Here is a 236-residue protein sequence, read N- to C-terminus: Dual specificity protein phosphatase 15 (236 aa).

Residue Gly2 is the site of N-myristoyl glycine attachment. The Tyrosine-protein phosphatase domain occupies 4–144 (GMTKVLPGLY…LEEFGWANSQ (141 aa)). Residue Cys88 is the Phosphocysteine intermediate of the active site. The disordered stretch occupies residues 178-213 (GPGTSAPSATTASSAASEGTLQRLVPRSPRESHRPL). Low complexity predominate over residues 181–194 (TSAPSATTASSAAS).

The protein belongs to the protein-tyrosine phosphatase family. Non-receptor class dual specificity subfamily.

The protein resides in the cell membrane. It catalyses the reaction O-phospho-L-tyrosyl-[protein] + H2O = L-tyrosyl-[protein] + phosphate. It carries out the reaction O-phospho-L-seryl-[protein] + H2O = L-seryl-[protein] + phosphate. The catalysed reaction is O-phospho-L-threonyl-[protein] + H2O = L-threonyl-[protein] + phosphate. Functionally, may play a role in the regulation of oligodendrocyte differentiation. May play a role in the regulation of myelin formation. Involved in the regulation of Erk1/2 phosphorylation in Schwann cells; the signaling may be linked to the regulation of myelination. May dephosphorylate MAPK13, ATF2, ERBB3, PDGFRB and SNX6. This is Dual specificity protein phosphatase 15 (Dusp15) from Rattus norvegicus (Rat).